We begin with the raw amino-acid sequence, 177 residues long: Putative adenylate kinase (177 aa).

Residues Gly10, Gly12, Lys13, Thr14, and Thr15 each coordinate ATP. The segment at 30-53 (DITEAVKKYKLYTEKDEDMDSYVI) is NMP. An LID region spans residues 103–113 (KRGYKPKKVLE). Arg104 is an ATP binding site.

It belongs to the adenylate kinase family. AK6 subfamily. As to quaternary structure, interacts with uS11. Not a structural component of 40S pre-ribosomes, but transiently interacts with them by binding to uS11.

The enzyme catalyses AMP + ATP = 2 ADP. It carries out the reaction ATP + H2O = ADP + phosphate + H(+). In terms of biological role, broad-specificity nucleoside monophosphate (NMP) kinase that catalyzes the reversible transfer of the terminal phosphate group between nucleoside triphosphates and monophosphates. Also has ATPase activity. Involved in the late maturation steps of the 30S ribosomal particles, specifically 16S rRNA maturation. While NMP activity is not required for ribosome maturation, ATPase activity is. Associates transiently with small ribosomal subunit protein uS11. ATP hydrolysis breaks the interaction with uS11. May temporarily remove uS11 from the ribosome to enable a conformational change of the ribosomal RNA that is needed for the final maturation step of the small ribosomal subunit. The protein is Putative adenylate kinase of Methanocaldococcus jannaschii (strain ATCC 43067 / DSM 2661 / JAL-1 / JCM 10045 / NBRC 100440) (Methanococcus jannaschii).